The chain runs to 408 residues: E3 ubiquitin-protein ligase At1g12760 (408 aa).

Positions 1–52 (MSTETTTGNSSLIPASSSSSSSDAIDPAPLLFNGDDNEGNNGGGGGERRSVR) are disordered. A compositionally biased stretch (low complexity) spans 10 to 34 (SSLIPASSSSSSSDAIDPAPLLFNG). The next 2 membrane-spanning stretches (helical) occupy residues 100–120 (VVVLDIVWNLAFVSVATAILV) and 133–153 (VWLLGYALQCVLHMVCVCVEY). The tract at residues 160 to 195 (RTNRTTTTTPPRSRSSSSSSSSSSLEEEALGSRRNS) is disordered. Residues 163 to 183 (RTTTTTPPRSRSSSSSSSSSS) are compositionally biased toward low complexity. 3 helical membrane-spanning segments follow: residues 219-239 (ANTMFSFIWWIIGFYWVSAGG), 254-274 (IVFLGFDVFFVVFCVALACVI), and 275-295 (GIAVCCCLPCIIAVLYAVADQ). Residues 353 to 394 (CCICLSAYEDGTELRELPCGHHFHCSCVDKWLYINATCPLCK) form an RING-type; atypical zinc finger.

Its subcellular location is the membrane. It catalyses the reaction S-ubiquitinyl-[E2 ubiquitin-conjugating enzyme]-L-cysteine + [acceptor protein]-L-lysine = [E2 ubiquitin-conjugating enzyme]-L-cysteine + N(6)-ubiquitinyl-[acceptor protein]-L-lysine.. Its pathway is protein modification; protein ubiquitination. Its function is as follows. Mediates E2-dependent protein ubiquitination in vitro. The polypeptide is E3 ubiquitin-protein ligase At1g12760 (Arabidopsis thaliana (Mouse-ear cress)).